Consider the following 311-residue polypeptide: Aspartate carbamoyltransferase catalytic subunit (311 aa).

Carbamoyl phosphate contacts are provided by arginine 55 and threonine 56. Position 85 (lysine 85) interacts with L-aspartate. Carbamoyl phosphate contacts are provided by arginine 106, histidine 135, and glutamine 138. L-aspartate is bound by residues arginine 168 and arginine 230. Carbamoyl phosphate contacts are provided by leucine 268 and proline 269.

The protein belongs to the aspartate/ornithine carbamoyltransferase superfamily. ATCase family. As to quaternary structure, heterododecamer (2C3:3R2) of six catalytic PyrB chains organized as two trimers (C3), and six regulatory PyrI chains organized as three dimers (R2).

The enzyme catalyses carbamoyl phosphate + L-aspartate = N-carbamoyl-L-aspartate + phosphate + H(+). Its pathway is pyrimidine metabolism; UMP biosynthesis via de novo pathway; (S)-dihydroorotate from bicarbonate: step 2/3. Catalyzes the condensation of carbamoyl phosphate and aspartate to form carbamoyl aspartate and inorganic phosphate, the committed step in the de novo pyrimidine nucleotide biosynthesis pathway. In Klebsiella pneumoniae subsp. pneumoniae (strain ATCC 700721 / MGH 78578), this protein is Aspartate carbamoyltransferase catalytic subunit.